A 161-amino-acid polypeptide reads, in one-letter code: NADH-quinone oxidoreductase subunit I (161 aa).

2 4Fe-4S ferredoxin-type domains span residues 52 to 82 (LRRYPNGEERCIACKLCEAVCPALAITIESE) and 92 to 121 (KRYDIDLTKCIFCGFCEEACPVDAVVETRV). The [4Fe-4S] cluster site is built by C62, C65, C68, C72, C101, C104, C107, and C111.

It belongs to the complex I 23 kDa subunit family. In terms of assembly, NDH-1 is composed of 14 different subunits. Subunits NuoA, H, J, K, L, M, N constitute the membrane sector of the complex. Requires [4Fe-4S] cluster as cofactor.

It is found in the cell inner membrane. The enzyme catalyses a quinone + NADH + 5 H(+)(in) = a quinol + NAD(+) + 4 H(+)(out). Functionally, NDH-1 shuttles electrons from NADH, via FMN and iron-sulfur (Fe-S) centers, to quinones in the respiratory chain. The immediate electron acceptor for the enzyme in this species is believed to be ubiquinone. Couples the redox reaction to proton translocation (for every two electrons transferred, four hydrogen ions are translocated across the cytoplasmic membrane), and thus conserves the redox energy in a proton gradient. In Aromatoleum aromaticum (strain DSM 19018 / LMG 30748 / EbN1) (Azoarcus sp. (strain EbN1)), this protein is NADH-quinone oxidoreductase subunit I.